The chain runs to 449 residues: Tubulin alpha-8 chain (449 aa).

Residues 1–4 (MREC) carry the MREC motif motif. Residues Q11, E71, S140, G144, T145, T179, N206, and N228 each contribute to the GTP site. E71 serves as a coordination point for Mg(2+). E254 is a catalytic residue.

This sequence belongs to the tubulin family. In terms of assembly, dimer of alpha and beta chains. A typical microtubule is a hollow water-filled tube with an outer diameter of 25 nm and an inner diameter of 15 nM. Alpha-beta heterodimers associate head-to-tail to form protofilaments running lengthwise along the microtubule wall with the beta-tubulin subunit facing the microtubule plus end conferring a structural polarity. Microtubules usually have 13 protofilaments but different protofilament numbers can be found in some organisms and specialized cells. Requires Mg(2+) as cofactor. Post-translationally, some glutamate residues at the C-terminus are polyglycylated, resulting in polyglycine chains on the gamma-carboxyl group. Glycylation is mainly limited to tubulin incorporated into axonemes (cilia and flagella) whereas glutamylation is prevalent in neuronal cells, centrioles, axonemes, and the mitotic spindle. Both modifications can coexist on the same protein on adjacent residues, and lowering polyglycylation levels increases polyglutamylation, and reciprocally. Cilia and flagella glycylation is required for their stability and maintenance. Flagella glycylation controls sperm motility. Some glutamate residues at the C-terminus are polyglutamylated, resulting in polyglutamate chains on the gamma-carboxyl group. Polyglutamylation plays a key role in microtubule severing by spastin (SPAST). SPAST preferentially recognizes and acts on microtubules decorated with short polyglutamate tails: severing activity by SPAST increases as the number of glutamates per tubulin rises from one to eight, but decreases beyond this glutamylation threshold. Glutamylation is also involved in cilia motility. In terms of processing, the C-terminal phenylalanine residue is cleaved by MATCAP1/KIAA0895L.

The protein resides in the cytoplasm. The protein localises to the cytoskeleton. The catalysed reaction is GTP + H2O = GDP + phosphate + H(+). Functionally, tubulin is the major constituent of microtubules, a cylinder consisting of laterally associated linear protofilaments composed of alpha- and beta-tubulin heterodimers. Microtubules grow by the addition of GTP-tubulin dimers to the microtubule end, where a stabilizing cap forms. Below the cap, tubulin dimers are in GDP-bound state, owing to GTPase activity of alpha-tubulin. The sequence is that of Tubulin alpha-8 chain (Tuba8) from Rattus norvegicus (Rat).